A 486-amino-acid chain; its full sequence is Ribosome biogenesis protein YTM1 (486 aa).

Residues 12–99 form a ubiquitin-like (UBL) domain region; it reads RQLPINLFTR…ESQIDVEYVR (88 aa). 5 WD repeats span residues 212-251, 305-345, 349-388, 392-432, and 454-486; these read GHTG…PTEH, GHTG…AGAL, PFDK…SLIS, PTTS…TALF, and VLGE…ARGE. A disordered region spans residues 249-299; the sequence is TEHQVPADPVSYLPGQGTKKRRKLEKDQEKAPIEGLTDGDATGEGGWRRAP.

This sequence belongs to the WD repeat WDR12/YTM1 family. As to quaternary structure, component of the NOP7 complex, composed of ERB1, NOP7 and YTM1. The complex is held together by ERB1, which interacts with NOP7 via its N-terminal domain and with YTM1 via a high-affinity interaction between the seven-bladed beta-propeller domains of the 2 proteins. The NOP7 complex associates with the 66S pre-ribosome. Interacts (via UBL domain) with MDN1 (via VWFA/MIDAS domain).

The protein localises to the nucleus. It localises to the nucleolus. Its subcellular location is the nucleoplasm. In terms of biological role, component of the NOP7 complex, which is required for maturation of the 25S and 5.8S ribosomal RNAs and formation of the 60S ribosome. The sequence is that of Ribosome biogenesis protein YTM1 from Cryptococcus neoformans var. neoformans serotype D (strain B-3501A) (Filobasidiella neoformans).